The following is a 404-amino-acid chain: S-adenosylmethionine synthase (404 aa).

139–144 (GKGSSD) serves as a coordination point for ATP.

It belongs to the AdoMet synthase 2 family. Requires Mg(2+) as cofactor.

It carries out the reaction L-methionine + ATP + H2O = S-adenosyl-L-methionine + phosphate + diphosphate. It participates in amino-acid biosynthesis; S-adenosyl-L-methionine biosynthesis; S-adenosyl-L-methionine from L-methionine: step 1/1. Functionally, catalyzes the formation of S-adenosylmethionine from methionine and ATP. The protein is S-adenosylmethionine synthase of Saccharolobus solfataricus (strain ATCC 35092 / DSM 1617 / JCM 11322 / P2) (Sulfolobus solfataricus).